A 354-amino-acid polypeptide reads, in one-letter code: Probable tartrate dehydrogenase/decarboxylase (354 aa).

Mn(2+) is bound by residues Asp-221, Asp-245, and Asp-249.

Belongs to the isocitrate and isopropylmalate dehydrogenases family. Requires Mg(2+) as cofactor. Mn(2+) is required as a cofactor. It depends on K(+) as a cofactor.

The catalysed reaction is tartrate + NAD(+) = 2-hydroxy-3-oxosuccinate + NADH + H(+). It carries out the reaction (2R,3S)-tartrate + NAD(+) = 2-hydroxy-3-oxosuccinate + NADH + H(+). It catalyses the reaction (2R,3R)-tartrate + NAD(+) = 2-hydroxy-3-oxosuccinate + NADH + H(+). The enzyme catalyses (2R,3R)-tartrate + H(+) = (R)-glycerate + CO2. The catalysed reaction is (R)-malate + NAD(+) = pyruvate + CO2 + NADH. Its function is as follows. Has multiple catalytic activities. Apart from catalyzing the oxidation of (+)-tartrate to oxaloglycolate, also converts meso-tartrate to D-glycerate and catalyzes the oxidative decarboxylation of D-malate to pyruvate. The polypeptide is Probable tartrate dehydrogenase/decarboxylase (ycsA) (Bacillus subtilis (strain 168)).